The sequence spans 187 residues: Large ribosomal subunit protein bL9 (187 aa).

Residues 168–187 (EEAPAEEDVAAEETSEAAEA) form a disordered region.

This sequence belongs to the bacterial ribosomal protein bL9 family.

Its function is as follows. Binds to the 23S rRNA. The chain is Large ribosomal subunit protein bL9 from Paramagnetospirillum magneticum (strain ATCC 700264 / AMB-1) (Magnetospirillum magneticum).